A 472-amino-acid chain; its full sequence is Siroheme synthase 2 (472 aa).

Residues M1–V204 form a precorrin-2 dehydrogenase /sirohydrochlorin ferrochelatase region. Residues E22 to V23 and C43 to E44 each bind NAD(+). Position 128 is a phosphoserine (S128). The interval G216–G472 is uroporphyrinogen-III C-methyltransferase. Position 225 (P225) interacts with S-adenosyl-L-methionine. Catalysis depends on D248, which acts as the Proton acceptor. K270 functions as the Proton donor in the catalytic mechanism. S-adenosyl-L-methionine-binding positions include G301–D303, I306, T331–A332, M382, and G411.

This sequence in the N-terminal section; belongs to the precorrin-2 dehydrogenase / sirohydrochlorin ferrochelatase family. The protein in the C-terminal section; belongs to the precorrin methyltransferase family.

It carries out the reaction uroporphyrinogen III + 2 S-adenosyl-L-methionine = precorrin-2 + 2 S-adenosyl-L-homocysteine + H(+). The catalysed reaction is precorrin-2 + NAD(+) = sirohydrochlorin + NADH + 2 H(+). It catalyses the reaction siroheme + 2 H(+) = sirohydrochlorin + Fe(2+). It functions in the pathway cofactor biosynthesis; adenosylcobalamin biosynthesis; precorrin-2 from uroporphyrinogen III: step 1/1. It participates in cofactor biosynthesis; adenosylcobalamin biosynthesis; sirohydrochlorin from precorrin-2: step 1/1. The protein operates within porphyrin-containing compound metabolism; siroheme biosynthesis; precorrin-2 from uroporphyrinogen III: step 1/1. Its pathway is porphyrin-containing compound metabolism; siroheme biosynthesis; siroheme from sirohydrochlorin: step 1/1. It functions in the pathway porphyrin-containing compound metabolism; siroheme biosynthesis; sirohydrochlorin from precorrin-2: step 1/1. Functionally, multifunctional enzyme that catalyzes the SAM-dependent methylations of uroporphyrinogen III at position C-2 and C-7 to form precorrin-2 via precorrin-1. Then it catalyzes the NAD-dependent ring dehydrogenation of precorrin-2 to yield sirohydrochlorin. Finally, it catalyzes the ferrochelation of sirohydrochlorin to yield siroheme. The sequence is that of Siroheme synthase 2 from Yersinia enterocolitica serotype O:8 / biotype 1B (strain NCTC 13174 / 8081).